Reading from the N-terminus, the 218-residue chain is Small ribosomal subunit protein uS3c (218 aa).

The 72-residue stretch at 47-118 (VQKNMKTSSG…KLNIAITRIE (72 aa)) folds into the KH type-2 domain.

The protein belongs to the universal ribosomal protein uS3 family. In terms of assembly, part of the 30S ribosomal subunit.

It is found in the plastid. Its subcellular location is the chloroplast. This is Small ribosomal subunit protein uS3c (rps3) from Helianthus annuus (Common sunflower).